Consider the following 240-residue polypeptide: uncharacterized protein (240 aa).

The tract at residues 93–160 (QEASGCTVGE…AGGGAAASGQ (68 aa)) is disordered. Low complexity-rich tracts occupy residues 110 to 119 (AQPSQPAQGG) and 129 to 150 (GGAEEAGGAQASQPAESAPAEN).

This is an uncharacterized protein from Streptomyces viridochromogenes.